A 610-amino-acid polypeptide reads, in one-letter code: Dopamine beta-hydroxylase (610 aa).

Over 1 to 9 the chain is Cytoplasmic; the sequence is MQVPSPSVR. Residues 10–30 traverse the membrane as a helical; Signal-anchor for type II membrane protein segment; it reads EAASMYGTAVAVFLVILVAAL. Over 31–610 the chain is Intragranular; it reads QGSAPAESPF…TVLNISGGKG (580 aa). Residues 50 to 166 form the DOMON domain; that stretch reads GTLELSWNIS…GTVHLVYGFL (117 aa). 6 disulfides stabilise this stretch: Cys147–Cys589, Cys225–Cys276, Cys262–Cys288, Cys383–Cys496, Cys387–Cys558, and Cys459–Cys481. N-linked (GlcNAc...) asparagine glycosylation occurs at Asn177. Tyr223 is an active-site residue. Positions 255 and 256 each coordinate Cu(2+). Positions 326, 405, 407, and 480 each coordinate Cu(2+). His405 is a catalytic residue. Asn559 carries an N-linked (GlcNAc...) asparagine glycan. Residues 585-610 are disordered; it reads PTPHCPASQAQSPAGPTVLNISGGKG.

This sequence belongs to the copper type II ascorbate-dependent monooxygenase family. Homotetramer; composed of two disulfide-linked dimers. Cu(2+) is required as a cofactor. Proteolytic cleavage after the membrane-anchor leads to the release of the soluble form. In terms of processing, N-glycosylated. In terms of tissue distribution, detected in chromaffin granules in the adrenal medulla (at protein level). Detected in adrenal medulla.

Its subcellular location is the cytoplasmic vesicle. It is found in the secretory vesicle lumen. The protein localises to the secretory vesicle. It localises to the chromaffin granule lumen. The protein resides in the secretory vesicle membrane. Its subcellular location is the chromaffin granule membrane. The catalysed reaction is dopamine + 2 L-ascorbate + O2 = (R)-noradrenaline + 2 monodehydro-L-ascorbate radical + H2O. It functions in the pathway catecholamine biosynthesis; (R)-noradrenaline biosynthesis; (R)-noradrenaline from dopamine: step 1/1. Functionally, catalyzes the hydroxylation of dopamine to noradrenaline (also known as norepinephrine), and is thus vital for regulation of these neurotransmitters. In Bos taurus (Bovine), this protein is Dopamine beta-hydroxylase (DBH).